The sequence spans 265 residues: WUSCHEL-related homeobox 3B (265 aa).

The homeobox; WUS-type DNA-binding region spans Thr4–Leu68. 2 disordered regions span residues Gln77–Ala107 and Pro242–Asn265. Residues Ser254–Asn265 show a composition bias toward low complexity.

This sequence belongs to the WUS homeobox family. Predominantly expressed in tissues enriched for shoot meristems and young lateral organ primordia. First expressed in lateral domains of shoot meristems. It is then expressed in the margins of young lateral organ primordia. Not expressed in roots, seedling leaves or fully expanded coleoptiles. Also expressed in vegetative shoot apices (five leaf primordia and the SAM) and in the male inflorescence. Expressed at high level in the female inflorescence.

The protein localises to the nucleus. Its function is as follows. Probable transcription factor required to initiate organ founder cells in a lateral domain of shoot meristems. Involved in leaf formation. This is WUSCHEL-related homeobox 3B (WOX3B) from Zea mays (Maize).